The sequence spans 1083 residues: Probable arabinosyltransferase B (1083 aa).

Helical transmembrane passes span 23 to 45 (VARWVAAIAGLIGFVSSVVTPLL), 222 to 239 (FAMMLAIITTVGALVALW), 252 to 274 (LIPARWSMFTLVDVAVIFGFLLW), 331 to 350 (SMWIRLPDLICGVACWLLLS), 357 to 379 (LGPAIVGFKPALWAAGLVLLAAW), 421 to 443 (TAAFTIGIQPTGLIAVAALLAGG), 456 to 478 (AVGAWPLVAPLLAAGTVVLTVVF), 525 to 542 (FGFLITALCLFTAVLITL), 555 to 572 (AWRLIGTILGTMFFLTFA), 576 to 598 (WVHHFGLFAALGAAVAALTTVLV), 611 to 633 (AFLAALLFVMTLCFATTNGWWYV), 648 to 670 (DGITFSTIFFILFAIVALYAYYL), and 690 to 712 (FWAPIPFAAGLMTLVFIGSMVAG).

The protein belongs to the emb family.

It localises to the cell membrane. Arabinosyl transferase responsible for the polymerization of arabinose into the arabinan of arabinogalactan. This Mycobacterium leprae (strain TN) protein is Probable arabinosyltransferase B (embB).